We begin with the raw amino-acid sequence, 273 residues long: N(omega)-hydroxy-L-arginine amidinohydrolase (273 aa).

Positions 109, 111, 113, 198, and 200 each coordinate Mn(2+).

This sequence belongs to the arginase family. Mn(2+) serves as cofactor.

The enzyme catalyses N(omega)-hydroxy-L-arginine + H2O = hydroxyurea + L-ornithine. Its function is as follows. Involved in the biosynthesis of the antibiotic D-cycloserine (DCS), a cyclic structural analog of D-alanine, used as an antitubercular agent. Catalyzes the hydrolysis of N(omega)-hydroxy-L-arginine (NHA) to yield hydroxyurea (HU) and L-ornithine. This is N(omega)-hydroxy-L-arginine amidinohydrolase from Streptomyces lavendulae.